The following is a 103-amino-acid chain: Large ribosomal subunit protein bL21 (103 aa).

This sequence belongs to the bacterial ribosomal protein bL21 family. As to quaternary structure, part of the 50S ribosomal subunit. Contacts protein L20.

Functionally, this protein binds to 23S rRNA in the presence of protein L20. This is Large ribosomal subunit protein bL21 from Mycolicibacterium paratuberculosis (strain ATCC BAA-968 / K-10) (Mycobacterium paratuberculosis).